The chain runs to 177 residues: Nucleoside-triphosphatase THEP1 (177 aa).

ATP contacts are provided by residues 10–17 and 101–108; these read GKPGIGKT and CLVIDEIG.

This sequence belongs to the THEP1 NTPase family.

The catalysed reaction is a ribonucleoside 5'-triphosphate + H2O = a ribonucleoside 5'-diphosphate + phosphate + H(+). Functionally, has nucleotide phosphatase activity towards ATP, GTP, CTP, TTP and UTP. May hydrolyze nucleoside diphosphates with lower efficiency. In Natranaerobius thermophilus (strain ATCC BAA-1301 / DSM 18059 / JW/NM-WN-LF), this protein is Nucleoside-triphosphatase THEP1.